We begin with the raw amino-acid sequence, 232 residues long: Large ribosomal subunit protein uL1 (232 aa).

It belongs to the universal ribosomal protein uL1 family. Part of the 50S ribosomal subunit.

Its function is as follows. Binds directly to 23S rRNA. The L1 stalk is quite mobile in the ribosome, and is involved in E site tRNA release. In terms of biological role, protein L1 is also a translational repressor protein, it controls the translation of the L11 operon by binding to its mRNA. This Dinoroseobacter shibae (strain DSM 16493 / NCIMB 14021 / DFL 12) protein is Large ribosomal subunit protein uL1.